The sequence spans 429 residues: Neuronal pentraxin-2 (429 aa).

Residues 1–14 (MLALLTVGVALAVA) form the signal peptide. N-linked (GlcNAc...) asparagine glycosylation is found at asparagine 146 and asparagine 187. A Pentraxin (PTX) domain is found at 221–422 (DAFKVSLPLR…GASKWPVETC (202 aa)). Residues cysteine 251 and cysteine 311 are joined by a disulfide bond. Residues asparagine 275, glutamate 353, glutamine 354, aspartate 355, and glutamine 365 each contribute to the Ca(2+) site. Asparagine 391 carries an N-linked (GlcNAc...) asparagine glycan.

As to quaternary structure, homooligomer or heterooligomer (probably pentamer) with neuronal pentraxin receptor (NPTXR). The cofactor is Ca(2+).

The protein localises to the secreted. Its function is as follows. Likely to play role in the modification of cellular properties that underlie long-term plasticity. Binds to agar matrix in a calcium-dependent manner. This chain is Neuronal pentraxin-2 (Nptx2), found in Mus musculus (Mouse).